The following is a 210-amino-acid chain: Large ribosomal subunit protein uL3 (210 aa).

Q151 is subject to N5-methylglutamine.

The protein belongs to the universal ribosomal protein uL3 family. As to quaternary structure, part of the 50S ribosomal subunit. Forms a cluster with proteins L14 and L19. In terms of processing, methylated by PrmB.

One of the primary rRNA binding proteins, it binds directly near the 3'-end of the 23S rRNA, where it nucleates assembly of the 50S subunit. The protein is Large ribosomal subunit protein uL3 of Aeromonas hydrophila subsp. hydrophila (strain ATCC 7966 / DSM 30187 / BCRC 13018 / CCUG 14551 / JCM 1027 / KCTC 2358 / NCIMB 9240 / NCTC 8049).